The following is a 234-amino-acid chain: LexA repressor (234 aa).

Residues 1 to 11 (MNEATSHEGPK) show a composition bias toward basic and acidic residues. The interval 1-34 (MNEATSHEGPKRSLPGRPPGIRADSSGLTDRQRR) is disordered. Positions 52–72 (MREIGQAVGLSSTSSVAHQLM) form a DNA-binding region, H-T-H motif. The span at 83-94 (DPHRPRAYEVRG) shows a compositional bias: basic and acidic residues. A disordered region spans residues 83-109 (DPHRPRAYEVRGSDQSSSVQPTDTAGK). The span at 95 to 105 (SDQSSSVQPTD) shows a compositional bias: polar residues. Active-site for autocatalytic cleavage activity residues include serine 158 and lysine 195.

Belongs to the peptidase S24 family. As to quaternary structure, homodimer.

The enzyme catalyses Hydrolysis of Ala-|-Gly bond in repressor LexA.. Represses a number of genes involved in the response to DNA damage (SOS response), including recA and lexA. In the presence of single-stranded DNA, RecA interacts with LexA causing an autocatalytic cleavage which disrupts the DNA-binding part of LexA, leading to derepression of the SOS regulon and eventually DNA repair. The chain is LexA repressor from Streptomyces avermitilis (strain ATCC 31267 / DSM 46492 / JCM 5070 / NBRC 14893 / NCIMB 12804 / NRRL 8165 / MA-4680).